We begin with the raw amino-acid sequence, 1033 residues long: Calcium-transporting ATPase 3, plasma membrane-type (1033 aa).

The Cytoplasmic segment spans residues 1–180 (MHSGVNGCCP…FVWEALEDTT (180 aa)). 2 consecutive transmembrane segments (helical) span residues 181–201 (LIIL…TEGW) and 204–224 (GAHD…VTGT). Residues 225–268 (SNYQQSLQFRDLDKEKRKILVQVTRNGLRQRVLIDDLLPGDAVH) are Cytoplasmic-facing. 2 helical membrane passes run 269–289 (LAVG…SVLV) and 362–382 (IGKI…QGII). The Cytoplasmic segment spans residues 383–405 (GQKYLDGLLLSWSGDDVLEILDH). Residues 406–426 (FAVAVTIVVVAVPEGLPLAVT) traverse the membrane as a helical segment. Residue D461 is the 4-aspartylphosphate intermediate of the active site. Residues D762 and D766 each contribute to the Mg(2+) site. The chain crosses the membrane as a helical span at residues 823–843 (FQLTVNVVALLVNFTSACFTG). The Cytoplasmic segment spans residues 844 to 846 (DAP). A run of 2 helical transmembrane segments spans residues 847 to 867 (LTAV…ALAL) and 928 to 948 (IVLN…NEIS). Topologically, residues 949–965 (SREMEDINVLRGMAGNS) are cytoplasmic. Transmembrane regions (helical) follow at residues 966–986 (IFLG…QFLG) and 999–1019 (WLIS…IKLI). Topologically, residues 1020-1033 (AVEPHEKADTRRTP) are cytoplasmic.

Belongs to the cation transport ATPase (P-type) (TC 3.A.3) family. Type IIB subfamily.

Its subcellular location is the membrane. The enzyme catalyses Ca(2+)(in) + ATP + H2O = Ca(2+)(out) + ADP + phosphate + H(+). Activated by calmodulin. In terms of biological role, this magnesium-dependent enzyme catalyzes the hydrolysis of ATP coupled with the translocation of calcium from the cytosol out of the cell, into the endoplasmic reticulum, or into organelles. The chain is Calcium-transporting ATPase 3, plasma membrane-type from Oryza sativa subsp. japonica (Rice).